We begin with the raw amino-acid sequence, 347 residues long: Ribosomal RNA small subunit methyltransferase C (347 aa).

Belongs to the methyltransferase superfamily. RsmC family. Monomer.

It localises to the cytoplasm. The enzyme catalyses guanosine(1207) in 16S rRNA + S-adenosyl-L-methionine = N(2)-methylguanosine(1207) in 16S rRNA + S-adenosyl-L-homocysteine + H(+). Functionally, specifically methylates the guanine in position 1207 of 16S rRNA in the 30S particle. The sequence is that of Ribosomal RNA small subunit methyltransferase C from Yersinia pseudotuberculosis serotype O:1b (strain IP 31758).